Reading from the N-terminus, the 331-residue chain is Lipoyl synthase (331 aa).

Cysteine 60, cysteine 65, cysteine 71, cysteine 86, cysteine 90, cysteine 93, and serine 301 together coordinate [4Fe-4S] cluster. Residues 72–290 (WSRGTATFML…REEGMQLGFL (219 aa)) form the Radical SAM core domain.

The protein belongs to the radical SAM superfamily. Lipoyl synthase family. The cofactor is [4Fe-4S] cluster.

Its subcellular location is the cytoplasm. The enzyme catalyses [[Fe-S] cluster scaffold protein carrying a second [4Fe-4S](2+) cluster] + N(6)-octanoyl-L-lysyl-[protein] + 2 oxidized [2Fe-2S]-[ferredoxin] + 2 S-adenosyl-L-methionine + 4 H(+) = [[Fe-S] cluster scaffold protein] + N(6)-[(R)-dihydrolipoyl]-L-lysyl-[protein] + 4 Fe(3+) + 2 hydrogen sulfide + 2 5'-deoxyadenosine + 2 L-methionine + 2 reduced [2Fe-2S]-[ferredoxin]. It functions in the pathway protein modification; protein lipoylation via endogenous pathway; protein N(6)-(lipoyl)lysine from octanoyl-[acyl-carrier-protein]: step 2/2. Catalyzes the radical-mediated insertion of two sulfur atoms into the C-6 and C-8 positions of the octanoyl moiety bound to the lipoyl domains of lipoate-dependent enzymes, thereby converting the octanoylated domains into lipoylated derivatives. In Deinococcus radiodurans (strain ATCC 13939 / DSM 20539 / JCM 16871 / CCUG 27074 / LMG 4051 / NBRC 15346 / NCIMB 9279 / VKM B-1422 / R1), this protein is Lipoyl synthase.